The primary structure comprises 351 residues: L-threonine 3-dehydrogenase (351 aa).

Residue Cys-39 coordinates Zn(2+). Active-site charge relay system residues include Thr-41 and His-44. Residues His-64, Glu-65, Cys-94, Cys-97, Cys-100, and Cys-108 each coordinate Zn(2+). NAD(+)-binding positions include Ile-176, Asp-196, Arg-201, 271-273, and 295-296; these read LGI and IY.

The protein belongs to the zinc-containing alcohol dehydrogenase family. In terms of assembly, homotetramer. The cofactor is Zn(2+).

The protein localises to the cytoplasm. It catalyses the reaction L-threonine + NAD(+) = (2S)-2-amino-3-oxobutanoate + NADH + H(+). It participates in amino-acid degradation; L-threonine degradation via oxydo-reductase pathway; glycine from L-threonine: step 1/2. In terms of biological role, catalyzes the NAD(+)-dependent oxidation of L-threonine to 2-amino-3-ketobutyrate. The protein is L-threonine 3-dehydrogenase of Francisella tularensis subsp. mediasiatica (strain FSC147).